Consider the following 873-residue polypeptide: Serine/threonine-protein phosphatase 4 regulatory subunit 4 (873 aa).

HEAT repeat units follow at residues 213-251, 252-290, and 392-427; these read ILPLVKSLCQDVEYEVRSCMCRQLENIAQGIGTELTKSV, VLPELIELSRDEGSSVRLAAFETLVNLLDIFDTDDRSQT, and NFHMELYSTFFCLCHDPEVPVRYTIAICFYEVSKLL. Positions 686–720 form a coiled coil; it reads QKKFYEKDLLDQEKEREELLLLEMEQLEKEKQQND. Over residues 713-737 the composition is skewed to basic and acidic residues; it reads EKEKQQNDGRPMSDKMFEKKRRDTK. The interval 713-766 is disordered; the sequence is EKEKQQNDGRPMSDKMFEKKRRDTKTPTQSLPKNIPISVPGPSSVTPSTSKEIK. Residues 747–762 are compositionally biased toward low complexity; the sequence is IPISVPGPSSVTPSTS. Ser-775 is modified (phosphoserine). A Phosphothreonine modification is found at Thr-797. Polar residues predominate over residues 822–858; sequence TRNASSVPSSFSPNTPLPSTSRGTGNSVDPKSSGSKD. Residues 822–873 form a disordered region; it reads TRNASSVPSSFSPNTPLPSTSRGTGNSVDPKSSGSKDTQPRKATLKSRKSNP. Positions 864–873 are enriched in basic residues; sequence ATLKSRKSNP.

Serine/threonine-protein phosphatase 4 (PP4) occurs in different assemblies of the catalytic and one or more regulatory subunits. Component of the PP4 complex PPP4C-PPP4R4.

It localises to the cytoplasm. Functionally, putative regulatory subunit of serine/threonine-protein phosphatase 4. The chain is Serine/threonine-protein phosphatase 4 regulatory subunit 4 (PPP4R4) from Homo sapiens (Human).